We begin with the raw amino-acid sequence, 80 residues long: UPF0270 protein VFMJ11_0205 (80 aa).

Belongs to the UPF0270 family.

The polypeptide is UPF0270 protein VFMJ11_0205 (Aliivibrio fischeri (strain MJ11) (Vibrio fischeri)).